The chain runs to 325 residues: NADH-quinone oxidoreductase subunit H (325 aa).

9 consecutive transmembrane segments (helical) span residues 11–31, 50–69, 81–101, 114–134, 154–174, 186–206, 237–257, 265–285, and 304–324; these read ILLS…CGAF, NRVG…KMFF, VIFT…FAIV, IGIL…LFAG, VSYE…AGSF, LWNV…GVAV, FFVG…TLFF, LPPF…FILI, and VCLP…LWQA.

The protein belongs to the complex I subunit 1 family. As to quaternary structure, NDH-1 is composed of 13 different subunits. Subunits NuoA, H, J, K, L, M, N constitute the membrane sector of the complex.

The protein resides in the cell inner membrane. It carries out the reaction a quinone + NADH + 5 H(+)(in) = a quinol + NAD(+) + 4 H(+)(out). In terms of biological role, NDH-1 shuttles electrons from NADH, via FMN and iron-sulfur (Fe-S) centers, to quinones in the respiratory chain. The immediate electron acceptor for the enzyme in this species is believed to be ubiquinone. Couples the redox reaction to proton translocation (for every two electrons transferred, four hydrogen ions are translocated across the cytoplasmic membrane), and thus conserves the redox energy in a proton gradient. This subunit may bind ubiquinone. The protein is NADH-quinone oxidoreductase subunit H of Salmonella arizonae (strain ATCC BAA-731 / CDC346-86 / RSK2980).